Consider the following 249-residue polypeptide: Type I iodothyronine deiodinase (249 aa).

Residues 1 to 12 (MGLPQPGLWLKR) lie on the Extracellular side of the membrane. The chain crosses the membrane as a helical; Signal-anchor for type III membrane protein span at residues 13–33 (LWVLLEVAVHVVVGKVLLILF). Residues 34–249 (PDRVKRNILA…VRAVLEKLHS (216 aa)) lie on the Cytoplasmic side of the membrane. Selenocysteine 126 is an active-site residue. A non-standard amino acid (selenocysteine) is located at residue selenocysteine 126.

Belongs to the iodothyronine deiodinase family. Predominantly monomer. Can form homodimers but homodimerization is not essential for enzyme activity.

It is found in the cell membrane. Its subcellular location is the endoplasmic reticulum membrane. It localises to the basolateral cell membrane. It carries out the reaction 3,3',5-triiodo-L-thyronine + iodide + A + H(+) = L-thyroxine + AH2. It catalyses the reaction 3,3',5'-triiodo-L-thyronine + iodide + A + H(+) = L-thyroxine + AH2. The enzyme catalyses 3,3'-diiodo-L-thyronine + iodide + A + H(+) = 3,3',5'-triiodo-L-thyronine + AH2. The catalysed reaction is 3,3'-diiodo-L-thyronine + iodide + A + H(+) = 3,3',5-triiodo-L-thyronine + AH2. It carries out the reaction 3'-iodo-L-thyronine + iodide + A + H(+) = 3',5'-diiodo-L-thyronine + AH2. It catalyses the reaction 3-iodo-L-thyronine + iodide + A + H(+) = 3,5-diiodo-L-thyronine + AH2. The enzyme catalyses 3-iodo-L-thyronine + iodide + A + H(+) = 3,3'-diiodo-L-thyronine + AH2. The catalysed reaction is 3,3'-diiodothyronamine + iodide + A + H(+) = 3,3',5'-triiodothyronamine + AH2. It carries out the reaction 3'-iodothyronamine + iodide + A + H(+) = 3',5'-diiodothyronamine + AH2. It catalyses the reaction 3-iodothyronamine + iodide + A + H(+) = 3,3'-diiodothyronamine + AH2. The enzyme catalyses 3,3'-diiodothyronamine + iodide + A + H(+) = 3,3',5-triiodothyronamine + AH2. The catalysed reaction is 3-iodothyronamine + iodide + A + H(+) = 3,5-diiodothyronamine + AH2. It carries out the reaction 3,3'-diiodo-L-thyronine sulfate + iodide + A + H(+) = 3,3',5'-triiodo-L-thyronine sulfate + AH2. It catalyses the reaction 3,3',5'-triiodo-L-thyronine sulfate + iodide + A + H(+) = L-thyroxine sulfate + AH2. The enzyme catalyses 3,3'-diiodo-L-thyronine sulfate + iodide + A + H(+) = 3,3',5-triiodo-L-thyronine sulfate + AH2. With respect to regulation, deiodination of substrates 3,3',5'-triiodothyronine, 3,3',5'-triiodothyronamine and 3',5'- diiodothyronamine are inhibited by 6n-propyl-2-thiouracil (PTU). In terms of biological role, plays a crucial role in the metabolism of thyroid hormones (TH) and has specific roles in TH activation and inactivation by deiodination. Catalyzes the deiodination of L-thyroxine (T4) to 3,5,3'-triiodothyronine (T3), 3,3',5'-triiodothyronine (rT3) to 3,3'-diiodothyronine (3,3'-T2) and 3',5'-diiodothyronine (3',5'-T2) to 3'-monoiodothyronine (3'-T1) via outer-ring deiodination (ORD). Catalyzes the deiodination of T4 to 3,3',5'-triiodothyronine (rT3) via inner-ring deiodination (IRD). Catalyzes the deiodination of T3 to 3,3'-T2, 3,5-diiodothyronine (3,5-T2) to 3- monoiodothyronine (3-T1) and 3,3'-T2 to 3-T1 via IRD. Catalyzes the phenolic ring deiodinations of 3,3',5'-triiodothyronamine and 3',5'-diiodothyronamine. Catalyzes the phenolic ring deiodination of 3,3'-diiodothyronamine and tyrosyl ring deiodinations of 3,5,3'-triiodothyronamine and 3,5-diiodothyronamine. Catalyzes the deiodination of L-thyroxine sulfate and 3,3',5-triiodo-L-thyronine sulfate via IRD and of 3,3',5'-triiodo-L-thyronine sulfate via ORD. This Homo sapiens (Human) protein is Type I iodothyronine deiodinase (DIO1).